Consider the following 720-residue polypeptide: Mitogen-activated protein kinase 6 (720 aa).

Met-1 is covalently cross-linked (Peptide (Met-Gly) (interchain with G-Cter in ubiquitin)). The Protein kinase domain maps to 20-316 (YMDLKPLGCG…AEEALSHPYM (297 aa)). ATP contacts are provided by residues 26–34 (LGCGGNGLV) and Lys-49. The Proton acceptor role is filled by Asp-152. Ser-189 is modified (phosphoserine; by PAK1, PAK2 and PAK3). Positions 189–191 (SEG) match the SEG motif motif. Positions 332–337 (FHIEDE) match the FRIEDE motif motif. Phosphoserine is present on residues Ser-386, Ser-554, and Ser-556. The interval 638-657 (SEMLETEPVEEGKRGERGRE) is disordered. The span at 647-657 (EEGKRGERGRE) shows a compositional bias: basic and acidic residues. Ser-683 is modified (phosphoserine). The segment covering 700–714 (AMKSSPQIPHKTYSS) has biased composition (polar residues). The interval 700 to 720 (AMKSSPQIPHKTYSSILKHLN) is disordered.

Belongs to the protein kinase superfamily. CMGC Ser/Thr protein kinase family. MAP kinase subfamily. As to quaternary structure, heterodimer with ERK4/MAPK4. Interacts with (via FRIEDE motif) MAPKAPK5. Interacts with UBE3A; this interaction may be indirect and mediated by HERC2, possibly via HERC2 interaction with NEURL4. Mg(2+) is required as a cofactor. Phosphorylated at Ser-189 by PAK1, PAK2 and PAK3 resulting in catalytic activation. Phosphorylated by MAPKAPK5 at other sites. In terms of processing, ubiquitination at Met-1 leads to degradation by the proteasome pathway.

The protein localises to the cytoplasm. The protein resides in the nucleus. The enzyme catalyses L-seryl-[protein] + ATP = O-phospho-L-seryl-[protein] + ADP + H(+). The catalysed reaction is L-threonyl-[protein] + ATP = O-phospho-L-threonyl-[protein] + ADP + H(+). Its activity is regulated as follows. Activated by phosphorylation at Ser-189. Functionally, atypical MAPK protein. Phosphorylates microtubule-associated protein 2 (MAP2) and MAPKAPK5. The precise role of the complex formed with MAPKAPK5 is still unclear, but the complex follows a complex set of phosphorylation events: upon interaction with atypical MAPKAPK5, ERK3/MAPK6 is phosphorylated at Ser-189 and then mediates phosphorylation and activation of MAPKAPK5, which in turn phosphorylates ERK3/MAPK6. May promote entry in the cell cycle. This is Mitogen-activated protein kinase 6 (Mapk6) from Mus musculus (Mouse).